Consider the following 79-residue polypeptide: Large ribosomal subunit protein uL24 (79 aa).

The protein belongs to the universal ribosomal protein uL24 family. In terms of assembly, part of the 50S ribosomal subunit.

One of two assembly initiator proteins, it binds directly to the 5'-end of the 23S rRNA, where it nucleates assembly of the 50S subunit. Its function is as follows. One of the proteins that surrounds the polypeptide exit tunnel on the outside of the subunit. The polypeptide is Large ribosomal subunit protein uL24 (Lactobacillus gasseri (strain ATCC 33323 / DSM 20243 / BCRC 14619 / CIP 102991 / JCM 1131 / KCTC 3163 / NCIMB 11718 / NCTC 13722 / AM63)).